The sequence spans 142 residues: MTDVAKTLEELCTERGMRMTEQRRVIARILEDSEDHPDVEELYRRSVKVDAKISISTVYRTVKLFEDAGIIARHDFRDGRSRYETVPEEHHDHLIDLKTGTVIEFRSPEIEALQERIAREHGFRLVDHRLELYGVPLKKEDL.

The DNA-binding stretch occupies residues 1 to 87 (MTDVAKTLEE…DGRSRYETVP (87 aa)). Residues His36 and Glu84 each coordinate Zn(2+). The segment at 88 to 142 (EEHHDHLIDLKTGTVIEFRSPEIEALQERIAREHGFRLVDHRLELYGVPLKKEDL) is dimerization. Fe cation is bound by residues His90 and Asp92. Positions 93 and 104 each coordinate Zn(2+). 2 residues coordinate Fe cation: Glu111 and His128.

This sequence belongs to the Fur family. As to quaternary structure, homodimer.

The protein resides in the cytoplasm. Functionally, acts as a global negative controlling element, employing Fe(2+) as a cofactor to bind the operator of the repressed genes. In Rhizobium leguminosarum bv. viciae, this protein is Ferric uptake regulation protein (fur).